The following is a 267-amino-acid chain: Small ribosomal subunit protein uS3 (267 aa).

The KH type-2 domain maps to 43–111 (IRKEMSKDLE…QVQLNIFEVK (69 aa)). The tract at residues 216 to 267 (FEEQQAQQNNRPGRRGGDRRPRRGNRSAAPQAAEAPKAEAPAEAAPAAETKE) is disordered. Low complexity predominate over residues 241–267 (RSAAPQAAEAPKAEAPAEAAPAAETKE).

Belongs to the universal ribosomal protein uS3 family. Part of the 30S ribosomal subunit. Forms a tight complex with proteins S10 and S14.

Binds the lower part of the 30S subunit head. Binds mRNA in the 70S ribosome, positioning it for translation. This Bifidobacterium longum (strain DJO10A) protein is Small ribosomal subunit protein uS3.